The following is a 381-amino-acid chain: CCN family member 1 (381 aa).

An N-terminal signal peptide occupies residues 1-24 (MSSRIARALALVVTLLHLTRLALS). One can recognise an IGFBP N-terminal domain in the interval 25–94 (TCPAACHCPL…TALKGICRAQ (70 aa)). Intrachain disulfides connect cysteine 26/cysteine 50, cysteine 30/cysteine 52, cysteine 32/cysteine 53, cysteine 39/cysteine 56, cysteine 64/cysteine 78, and cysteine 70/cysteine 91. The region spanning 98–164 (RPCEYNSRIY…GQCCEEWVCD (67 aa)) is the VWFC domain. Residue serine 188 is modified to Phosphoserine. Residues 228-273 (KCIVQTTSWSQCSKTCGTGISTRVTNDNPECRLVKETRICEVRPCG) enclose the TSP type-1 domain. The tract at residues 279–315 (SLKKGKKCSKTKKSPEPVRFTYAGCLSVKKYRPKYCG) is heparin-binding. Intrachain disulfides connect cysteine 286–cysteine 323, cysteine 303–cysteine 337, cysteine 314–cysteine 353, cysteine 317–cysteine 355, and cysteine 322–cysteine 359. One can recognise a CTCK domain in the interval 286-360 (CSKTKKSPEP…QSCKCNYNCP (75 aa)).

It belongs to the CCN family. Interaction with integrins is heparin- and cell-type-dependent and promotes cell adhesion.

It is found in the secreted. Functionally, promotes cell proliferation, chemotaxis, angiogenesis and cell adhesion. Appears to play a role in wound healing by up-regulating, in skin fibroblasts, the expression of a number of genes involved in angiogenesis, inflammation and matrix remodeling including VEGA-A, VEGA-C, MMP1, MMP3, TIMP1, uPA, PAI-1 and integrins alpha-3 and alpha-5. CCN1-mediated gene regulation is dependent on heparin-binding. Down-regulates the expression of alpha-1 and alpha-2 subunits of collagen type-1. Promotes cell adhesion and adhesive signaling through integrin alpha-6/beta-1, cell migration through integrin alpha-1/beta-5 and cell proliferation through integrin alpha-v/beta-3. The chain is CCN family member 1 (CCN1) from Pan troglodytes (Chimpanzee).